Here is a 361-residue protein sequence, read N- to C-terminus: Chorismate synthase (361 aa).

Arg-48 and Arg-54 together coordinate NADP(+). FMN-binding positions include 125–127 (RSS), 238–239 (NA), Gly-278, 293–297 (KPTSS), and Arg-319.

Belongs to the chorismate synthase family. In terms of assembly, homotetramer. FMNH2 is required as a cofactor.

It catalyses the reaction 5-O-(1-carboxyvinyl)-3-phosphoshikimate = chorismate + phosphate. It participates in metabolic intermediate biosynthesis; chorismate biosynthesis; chorismate from D-erythrose 4-phosphate and phosphoenolpyruvate: step 7/7. Catalyzes the anti-1,4-elimination of the C-3 phosphate and the C-6 proR hydrogen from 5-enolpyruvylshikimate-3-phosphate (EPSP) to yield chorismate, which is the branch point compound that serves as the starting substrate for the three terminal pathways of aromatic amino acid biosynthesis. This reaction introduces a second double bond into the aromatic ring system. The sequence is that of Chorismate synthase from Escherichia coli (strain K12 / MC4100 / BW2952).